A 134-amino-acid polypeptide reads, in one-letter code: Profilin-2 (134 aa).

A disulfide bridge connects residues cysteine 13 and cysteine 118. The short motif at 84-100 is the Involved in PIP2 interaction element; the sequence is AVIRGKKGSGGITIKKT. Residue threonine 114 is modified to Phosphothreonine.

This sequence belongs to the profilin family. Occurs in many kinds of cells as a complex with monomeric actin in a 1:1 ratio. In terms of processing, phosphorylated by MAP kinases.

It localises to the cytoplasm. The protein resides in the cytoskeleton. Functionally, binds to actin and affects the structure of the cytoskeleton. At high concentrations, profilin prevents the polymerization of actin, whereas it enhances it at low concentrations. The protein is Profilin-2 of Olea europaea (Common olive).